The primary structure comprises 164 residues: C-phycoerythrin alpha chain (164 aa).

(2R,3E)-phycoerythrobilin is bound by residues Cys-82 and Cys-139.

The protein belongs to the phycobiliprotein family. As to quaternary structure, heterodimer of an alpha and a beta chain. Post-translationally, contains two covalently linked bilin chromophores.

The protein localises to the cellular thylakoid membrane. Light-harvesting photosynthetic bile pigment-protein from the phycobiliprotein complex. This chain is C-phycoerythrin alpha chain (cpeA), found in Microchaete diplosiphon (Fremyella diplosiphon).